Consider the following 226-residue polypeptide: Phosphoribosylformylglycinamidine synthase subunit PurQ (226 aa).

One can recognise a Glutamine amidotransferase type-1 domain in the interval 2–226 (KFAVIQFPGS…LKNFLVTVKN (225 aa)). Catalysis depends on cysteine 86, which acts as the Nucleophile. Active-site residues include histidine 195 and glutamate 197.

In terms of assembly, part of the FGAM synthase complex composed of 1 PurL, 1 PurQ and 2 PurS subunits.

It is found in the cytoplasm. It carries out the reaction N(2)-formyl-N(1)-(5-phospho-beta-D-ribosyl)glycinamide + L-glutamine + ATP + H2O = 2-formamido-N(1)-(5-O-phospho-beta-D-ribosyl)acetamidine + L-glutamate + ADP + phosphate + H(+). It catalyses the reaction L-glutamine + H2O = L-glutamate + NH4(+). Its pathway is purine metabolism; IMP biosynthesis via de novo pathway; 5-amino-1-(5-phospho-D-ribosyl)imidazole from N(2)-formyl-N(1)-(5-phospho-D-ribosyl)glycinamide: step 1/2. Functionally, part of the phosphoribosylformylglycinamidine synthase complex involved in the purines biosynthetic pathway. Catalyzes the ATP-dependent conversion of formylglycinamide ribonucleotide (FGAR) and glutamine to yield formylglycinamidine ribonucleotide (FGAM) and glutamate. The FGAM synthase complex is composed of three subunits. PurQ produces an ammonia molecule by converting glutamine to glutamate. PurL transfers the ammonia molecule to FGAR to form FGAM in an ATP-dependent manner. PurS interacts with PurQ and PurL and is thought to assist in the transfer of the ammonia molecule from PurQ to PurL. This is Phosphoribosylformylglycinamidine synthase subunit PurQ from Lactococcus lactis subsp. cremoris (Streptococcus cremoris).